Here is a 272-residue protein sequence, read N- to C-terminus: Putative phosphoenolpyruvate synthase regulatory protein (272 aa).

Position 152–159 (glycine 152–threonine 159) interacts with ADP.

The protein belongs to the pyruvate, phosphate/water dikinase regulatory protein family. PSRP subfamily.

It carries out the reaction [pyruvate, water dikinase] + ADP = [pyruvate, water dikinase]-phosphate + AMP + H(+). The enzyme catalyses [pyruvate, water dikinase]-phosphate + phosphate + H(+) = [pyruvate, water dikinase] + diphosphate. Bifunctional serine/threonine kinase and phosphorylase involved in the regulation of the phosphoenolpyruvate synthase (PEPS) by catalyzing its phosphorylation/dephosphorylation. This Pseudomonas putida (strain W619) protein is Putative phosphoenolpyruvate synthase regulatory protein.